The sequence spans 238 residues: Uridylate kinase (238 aa).

11–14 (KLSG) lines the ATP pocket. Gly-52 is a UMP binding site. Gly-53 and Arg-57 together coordinate ATP. UMP is bound by residues Asp-72 and 134–141 (TGFSYFTT). The ATP site is built by Asn-162, Tyr-168, and Asp-171.

Belongs to the UMP kinase family. Homohexamer.

The protein localises to the cytoplasm. The catalysed reaction is UMP + ATP = UDP + ADP. It participates in pyrimidine metabolism; CTP biosynthesis via de novo pathway; UDP from UMP (UMPK route): step 1/1. Inhibited by UTP. Its function is as follows. Catalyzes the reversible phosphorylation of UMP to UDP. In Mesoplasma florum (strain ATCC 33453 / NBRC 100688 / NCTC 11704 / L1) (Acholeplasma florum), this protein is Uridylate kinase.